The sequence spans 265 residues: Transmembrane protein 270 (265 aa).

Transmembrane regions (helical) follow at residues 72–92, 130–150, and 185–205; these read PLGQ…WLVL, LFLS…VVTW, and LYWW…YLIT. The interval 229-265 is disordered; that stretch reads QEVEPQEVSGSSLLPSLSASSDSESGTVLPEQETPRE. The segment covering 237 to 253 has biased composition (low complexity); sequence SGSSLLPSLSASSDSES.

Its subcellular location is the membrane. The chain is Transmembrane protein 270 from Homo sapiens (Human).